A 1375-amino-acid chain; its full sequence is Patatin-like phospholipase domain-containing protein 6 (1375 aa).

The interval 1 to 20 (MEAPLQTGMMGTSSHGLATN) is disordered. At 1 to 59 (MEAPLQTGMMGTSSHGLATNSSGAKVAERDGFQDVLAPGEGSAGRICGAQPVPFVPQVL) the chain is on the lumenal side. The span at 9–20 (MMGTSSHGLATN) shows a compositional bias: polar residues. A glycan (N-linked (GlcNAc...) asparagine) is linked at asparagine 20. The chain crosses the membrane as a helical span at residues 60–80 (GVMIGAGVAVVVTAVLILLVV). At 81-1375 (RRLRVPKTPA…QEPPGSATDA (1295 aa)) the chain is on the cytoplasmic side. Residue 195 to 322 (VLGHFEKPLF…VRVVQIIMVR (128 aa)) participates in a nucleoside 3',5'-cyclic phosphate binding. Disordered regions lie at residues 352–436 (FPSP…RSDF) and 449–472 (LQEEASGGSLAAPARTPTQEPREQ). A Phosphoserine modification is found at serine 354. Positions 359-376 (TRTSPVRGSKRMVSTSAT) are enriched in polar residues. Position 361 is a phosphothreonine (threonine 361). 2 positions are modified to phosphoserine: serine 362 and serine 372. Over residues 384–398 (GRPPDPTGAPLPGPT) the composition is skewed to pro residues. Residue serine 420 is modified to Phosphoserine. Position 464 is a phosphothreonine (threonine 464). A nucleoside 3',5'-cyclic phosphate-binding positions include 511-633 (ELAK…VAAR) and 629-749 (TVAA…LSQK). One can recognise a PNPLA domain in the interval 981-1147 (LVLGGGGARG…INNLPADIAR (167 aa)). A GXGXXG motif is present at residues 985-990 (GGGARG). Residues 1012–1016 (GTSIG) carry the GXSXG motif. Catalysis depends on serine 1014, which acts as the Nucleophile. Aspartate 1134 acts as the Proton acceptor in catalysis. Positions 1134–1136 (DGG) match the DGA/G motif. A disordered region spans residues 1306-1375 (SYVSDGCADG…QEPPGSATDA (70 aa)). Positions 1313 to 1329 (ADGEESDCLTEYEEDAG) are enriched in acidic residues.

This sequence belongs to the NTE family. In terms of processing, glycosylated. Expressed in brain, placenta, kidney, neuron and skeletal muscle. Expressed in the developing eye, pituitary and brain.

It localises to the endoplasmic reticulum membrane. The catalysed reaction is a 1-acyl-sn-glycero-3-phosphocholine + H2O = sn-glycerol 3-phosphocholine + a fatty acid + H(+). The enzyme catalyses 1-(9Z-octadecenoyl)-sn-glycero-3-phosphocholine + H2O = sn-glycerol 3-phosphocholine + (9Z)-octadecenoate + H(+). It catalyses the reaction 1-hexadecanoylglycerol + H2O = glycerol + hexadecanoate + H(+). It carries out the reaction 2-hexadecanoylglycerol + H2O = glycerol + hexadecanoate + H(+). The catalysed reaction is 1-(9Z-octadecenoyl)-glycerol + H2O = glycerol + (9Z)-octadecenoate + H(+). The enzyme catalyses 2-(9Z-octadecenoyl)-glycerol + H2O = glycerol + (9Z)-octadecenoate + H(+). It catalyses the reaction 2-(5Z,8Z,11Z,14Z-eicosatetraenoyl)-glycerol + H2O = glycerol + (5Z,8Z,11Z,14Z)-eicosatetraenoate + H(+). It carries out the reaction 1-hexadecanoyl-sn-glycero-3-phosphate + H2O = sn-glycerol 3-phosphate + hexadecanoate + H(+). The catalysed reaction is 1-hexadecanoyl-sn-glycero-3-phosphocholine + H2O = sn-glycerol 3-phosphocholine + hexadecanoate + H(+). Inhibited by a series a OPs such as mipafox (MPX), phenyl saligenin phosphate (PSP), phenyl dipentyl phosphinate (PDPP), diisopropyl fluorophosphate and paraoxon. Phospholipase B that deacylates intracellular phosphatidylcholine (PtdCho), generating glycerophosphocholine (GroPtdCho). This deacylation occurs at both sn-2 and sn-1 positions of PtdCho. Catalyzes the hydrolysis of several naturally occurring membrane-associated lipids. Hydrolyzes lysophospholipids and monoacylglycerols, preferring the 1-acyl to the 2-acyl isomer. Does not catalyze hydrolysis of di- or triacylglycerols or fatty acid amides. In Homo sapiens (Human), this protein is Patatin-like phospholipase domain-containing protein 6.